The chain runs to 299 residues: Caspase-1 (299 aa).

Residues 1-28 (MLDGKQDNGNVDSVDIKQRTNGGGDEGD) constitute a propeptide that is removed on maturation. Residues 1–45 (MLDGKQDNGNVDSVDIKQRTNGGGDEGDALGSNSSSQPNRVARMP) form a disordered region. Active-site residues include His136 and Cys178. Positions 185 to 195 (GGITLSRTETD) are excised as a propeptide.

Belongs to the peptidase C14A family. Heterotetramer that consists of two anti-parallel arranged heterodimers, each one formed by a 19/18 kDa (p19/18) and a 12 kDa (p12) subunit. In terms of processing, the two subunits are derived from the precursor sequence by an autocatalytic mechanism.

Involved in the activation cascade of caspases responsible for apoptosis execution. Inhibited by the baculovirus anti-apoptotic protein p35. Cleaves p35 and nuclear immunophilin FKBP46. The sequence is that of Caspase-1 from Spodoptera frugiperda (Fall armyworm).